The sequence spans 1106 residues: MPKRNDLNKVLIIGSGPIIIGQAVEFDYAGTQACSVLREEGIEVVLVNSNPATIMTDTNMADKVYLEPLEKDYIIKIIEKERPDGLIATMGGQVGLNLAMELVDSGILDKYEVDLLGTTMSSIKKAEDRDVFKTTMNDIGEPIPESKIVSTVDQAKDFAKNIGYPVIVRPAYTLGGTGGGVAQNEQQLSQIASNGIRSSLINQILVERCVIGWKEVEYEVMRDKKGNCITICNMENMDPVGVHTGDSIVAAPSQTLTNQEHQMLRQAALKIIGELQIEGGCNIQFALDPHSNDYYVIEVNPRVSRSSALASKATGYPIARVASKIAIGYSLDEIYNQVTGKTSACFEPSLDYVVLKLPRFPFDKFDLADRQLGTQMKATGEVMSIGRNFENAFLKALRSLEIDLDDLHQSIQEVDKELRQEEILKQLGKQTDERMFWLLQAIRKQISLQDIHDLTSIDMFFLQKLKNIVSYELEFSQLESQFKAESDEKNVEEIEEKLVEKKISSSNQQLQLLSEAKEAGLSDTMISASTGLTEEQIKNIRLQHNITPAYKMVDTCAGEFEANTPYYYSAYNEENEAIPPSEPTHDKRVLVLGAGPIRIGQGVEFDYCSVHSVMALKDLGYESLIINNNPETVSTDFNISDRLYFEPLFTEDVNSVIAQEKPQGVITQFGGQTAVNLARPLANDGAEVLGTSVSDMDRAENRDKFDQLLNKLGIDRPKGKTATSTKEAKEIADELGYPLVVRPSYVLGGRAMEVVYTPEDLETYMTWAVEVSPEYPVLIDQFLQGMEIEIDAVCDGQDVIIPGIMEHIERAGVHSGDSMAMFPAKSLDEITRDKIVSYTEALAKGLNIKGIINIQYVVYNGKVYVIEVNPRASRTVPFISKITGIPMVKIATKAMMGQSFQDQGYKPGLMPEPDYYAVKAPVFSFAKLTRVDTSLGPEMKSTGEVMGIDYDLNTALYKAMLASGFSINLNGGVLVTVADRDKEAVRPLVERFQKLGLKIFATSGTAEFLRNQGIDVEQVPKIVDESPNIIDLIREGQINYVINTFTIGKEPARDGFKIRRAAVENGIPCLTSLDTASALLTAMESLDRGESKQVKSLQDYLKELSN.

The tract at residues 1-401 (MPKRNDLNKV…AFLKALRSLE (401 aa)) is carboxyphosphate synthetic domain. Positions 129, 169, 175, 176, 208, 210, 215, 241, 242, 243, 284, and 298 each coordinate ATP. Positions 133-327 (KTTMNDIGEP…IARVASKIAI (195 aa)) constitute an ATP-grasp 1 domain. Residues Q284, E298, and N300 each coordinate Mg(2+). Mn(2+)-binding residues include Q284, E298, and N300. The segment at 402–577 (IDLDDLHQSI…YSAYNEENEA (176 aa)) is oligomerization domain. Positions 578–964 (IPPSEPTHDK…ALYKAMLASG (387 aa)) are carbamoyl phosphate synthetic domain. The region spanning 706–896 (DQLLNKLGID…MVKIATKAMM (191 aa)) is the ATP-grasp 2 domain. Positions 742, 781, 783, 787, 812, 813, 814, 815, 855, and 867 each coordinate ATP. Mg(2+) is bound by residues Q855, E867, and N869. Mn(2+) contacts are provided by Q855, E867, and N869. An MGS-like domain is found at 965–1106 (FSINLNGGVL…LQDYLKELSN (142 aa)). An allosteric domain region spans residues 965–1106 (FSINLNGGVL…LQDYLKELSN (142 aa)).

Belongs to the CarB family. As to quaternary structure, composed of two chains; the small (or glutamine) chain promotes the hydrolysis of glutamine to ammonia, which is used by the large (or ammonia) chain to synthesize carbamoyl phosphate. Tetramer of heterodimers (alpha,beta)4. Requires Mg(2+) as cofactor. Mn(2+) is required as a cofactor.

The enzyme catalyses hydrogencarbonate + L-glutamine + 2 ATP + H2O = carbamoyl phosphate + L-glutamate + 2 ADP + phosphate + 2 H(+). It carries out the reaction hydrogencarbonate + NH4(+) + 2 ATP = carbamoyl phosphate + 2 ADP + phosphate + 2 H(+). It functions in the pathway amino-acid biosynthesis; L-arginine biosynthesis; carbamoyl phosphate from bicarbonate: step 1/1. It participates in pyrimidine metabolism; UMP biosynthesis via de novo pathway; (S)-dihydroorotate from bicarbonate: step 1/3. Functionally, large subunit of the glutamine-dependent carbamoyl phosphate synthetase (CPSase). CPSase catalyzes the formation of carbamoyl phosphate from the ammonia moiety of glutamine, carbonate, and phosphate donated by ATP, constituting the first step of 2 biosynthetic pathways, one leading to arginine and/or urea and the other to pyrimidine nucleotides. The large subunit (synthetase) binds the substrates ammonia (free or transferred from glutamine from the small subunit), hydrogencarbonate and ATP and carries out an ATP-coupled ligase reaction, activating hydrogencarbonate by forming carboxy phosphate which reacts with ammonia to form carbamoyl phosphate. This is Carbamoyl phosphate synthase large chain from Natranaerobius thermophilus (strain ATCC BAA-1301 / DSM 18059 / JW/NM-WN-LF).